The chain runs to 125 residues: Multifunctional methyltransferase subunit TRM112-like protein (125 aa).

Residues 2-119 (KLLTHNLLSS…SRGIPNMLLN (118 aa)) enclose the TRM112 domain.

The protein belongs to the TRM112 family. As to quaternary structure, part of the heterodimeric BUD23-TRM112 methyltransferase complex; this heterodimerization is necessary for the metabolic stability and activity of the catalytic subunit BUD23. Part of the heterodimeric N6AMT1-TRM112 methyltransferase complex; this heterodimerization is necessary for S-adenosyl-L-methionine-binding to N6AMT1/HEMK2. Part of the heterodimeric ALKBH8-TRM112 methyltransferase complex. Part of the heterodimeric METTL5-TRM112 methyltransferase complex; this heterodimerization is necessary for the stability of the catalytic subunit METTL5. Part of the heterodimeric THUMPD3-TRM112 methyltransferase complex; this complex forms an active tRNA methyltransferase, where TRMT112 acts as an activator of the catalytic subunit THUMPD3. Part of the heterodimeric THUMPD2-TRM112 methyltransferase complex; this complex forms an active tRNA methyltransferase, where TRMT112 acts as an activator of the catalytic subunit THUMPD2. Part of the heterodimeric TRMT11-TRM112 methyltransferase complex; this complex forms an active tRNA methyltransferase, where TRMT112 acts as an activator of the catalytic subunit TRMT11. In terms of tissue distribution, abundantly expressed in the testis, also expressed in the brain, heart, kidney, liver, lung, muscle and spleen.

It is found in the nucleus. The protein localises to the nucleoplasm. The protein resides in the cytoplasm. It localises to the perinuclear region. Its function is as follows. Acts as an activator of both rRNA/tRNA and protein methyltransferases. Together with methyltransferase BUD23, methylates the N(7) position of a guanine in 18S rRNA. The heterodimer with HEMK2/N6AMT1 catalyzes N5-methylation of ETF1 on 'Gln-185', using S-adenosyl L-methionine as methyl donor. The heterodimer with ALKBH8 catalyzes the methylation of 5-carboxymethyl uridine to 5-methylcarboxymethyl uridine at the wobble position of the anticodon loop in target tRNA species. Together with methyltransferase THUMPD3, catalyzes the formation of N(2)-methylguanosine at position 6 in a broad range of tRNA substrates and at position 7 of tRNA(Trp). Involved in the pre-rRNA processing steps leading to small-subunit rRNA production. Together with methyltransferase METTL5, specifically methylates the 6th position of adenine in position 1832 of 18S rRNA. The sequence is that of Multifunctional methyltransferase subunit TRM112-like protein (Trmt112) from Mus musculus (Mouse).